A 658-amino-acid polypeptide reads, in one-letter code: Transmembrane 9 superfamily member 11 (658 aa).

The first 23 residues, 1–23 (MRSMDRFGIWVLAILLVIQSSFG), serve as a signal peptide directing secretion. The Lumenal segment spans residues 24–291 (FYLPGSYPHK…LKMEGSKVHW (268 aa)). The chain crosses the membrane as a helical span at residues 292–312 (FSILNSLMVITFLAGIVLVIF). Residues 313–364 (LRTVRRDLTRYEELDKEAQAQMNEELSGWKLVVGDVFRAPSNASLLCVMVGD) are Cytoplasmic-facing. The chain crosses the membrane as a helical span at residues 365-385 (GVQILGMAVVTILFAALGFMS). The Lumenal segment spans residues 386-391 (PASRGT). A helical membrane pass occupies residues 392–412 (LITGMLFFYMILGIAAGYVSV). Topologically, residues 413–432 (RLWRTIGCGEHRGWMSVAWK) are cytoplasmic. Residues 433–453 (AACFFPGIAFLILTTLNFLLW) traverse the membrane as a helical segment. The Lumenal portion of the chain corresponds to 454–462 (GSHSTGAIP). A helical transmembrane segment spans residues 463-483 (FSLFVILLLLWFCISVPLTLI). The Cytoplasmic portion of the chain corresponds to 484-515 (GGYFGAKAPHIEFPVRTNQIPREIPAQKYPSW). Residues 516–536 (LLVLGAGTLPFGTLFIELFFI) form a helical membrane-spanning segment. Residues 537–547 (MSSIWMGRVYY) are Lumenal-facing. The helical transmembrane segment at 548-568 (VFGFLFVVLILLVVVCAEVSL) threads the bilayer. Over 569-586 (VLTYMHLCVEDYKWWWKS) the chain is Cytoplasmic. A helical transmembrane segment spans residues 587 to 607 (FFASGSVAIYIFIYSINYLVF). Residues 608–619 (DLKSLSGPVSAT) lie on the Lumenal side of the membrane. The helical transmembrane segment at 620-640 (LYLGYSLFMVLAIMLATGTVG) threads the bilayer. At 641–658 (FLSSFWFVHYLFSSVKLD) the chain is on the cytoplasmic side. The Endoplasmic reticulum export signal signature appears at 647-652 (FVHYLF). The short motif at 656–658 (KLD) is the Golgi retention signal element.

The protein belongs to the nonaspanin (TM9SF) (TC 9.A.2) family.

It localises to the endosome membrane. The protein resides in the golgi apparatus membrane. This Arabidopsis thaliana (Mouse-ear cress) protein is Transmembrane 9 superfamily member 11.